A 474-amino-acid polypeptide reads, in one-letter code: L-arabinose isomerase (474 aa).

Residues glutamate 306, glutamate 331, histidine 348, and histidine 447 each coordinate Mn(2+).

It belongs to the arabinose isomerase family. Mn(2+) is required as a cofactor.

It catalyses the reaction beta-L-arabinopyranose = L-ribulose. It functions in the pathway carbohydrate degradation; L-arabinose degradation via L-ribulose; D-xylulose 5-phosphate from L-arabinose (bacterial route): step 1/3. Functionally, catalyzes the conversion of L-arabinose to L-ribulose. The sequence is that of L-arabinose isomerase from Leuconostoc mesenteroides subsp. mesenteroides (strain ATCC 8293 / DSM 20343 / BCRC 11652 / CCM 1803 / JCM 6124 / NCDO 523 / NBRC 100496 / NCIMB 8023 / NCTC 12954 / NRRL B-1118 / 37Y).